Here is a 308-residue protein sequence, read N- to C-terminus: Maspardin (308 aa).

Residues 87–159 (FCDGFRKLLD…NSFWLMPAFM (73 aa)) enclose the AB hydrolase-1 domain. S304 bears the Phosphoserine mark.

This sequence belongs to the AB hydrolase superfamily. As to quaternary structure, interacts with CD4. Interacts with ALDH16A1. As to expression, expressed in all tissues tested, including heart, brain, placenta, lung, liver, skeletal muscle, kidney and pancreas. Expressed in J.CaM1.6, HuT 78 and HeLa cell lines (at protein level).

It localises to the cytoplasm. The protein resides in the cytosol. It is found in the membrane. Its subcellular location is the endosome membrane. The protein localises to the golgi apparatus. It localises to the trans-Golgi network membrane. May play a role as a negative regulatory factor in CD4-dependent T-cell activation. The sequence is that of Maspardin (SPG21) from Homo sapiens (Human).